The sequence spans 602 residues: SAGA complex subunit SPT8 (602 aa).

The segment at 1–141 (MDEVDDILIN…REASSSTHEA (141 aa)) is disordered. Acidic residues-rich tracts occupy residues 14–23 (VDDEEDDEEM) and 36–75 (EGNDDGGEDEEDDDDDDEDDDDDEDEREDDDEQEDDDGED). Thr85 is subject to Phosphothreonine. Phosphoserine occurs at positions 108, 123, and 131. 2 WD repeats span residues 173 to 212 (PIQTHVNALAVSRGLKYLFLGGSDGYIRKYDLLNTLEGKL) and 305 to 346 (GHTQ…NEFK). The disordered stretch occupies residues 366-418 (VSGNVNSGKENENADDDMDSLFGDEDEDEKQDAGNEPVETGDGSNGEENKEQI). Residues 378–395 (NADDDMDSLFGDEDEDEK) are compositionally biased toward acidic residues. WD repeat units follow at residues 415 to 454 (KEQISEESLNIVYDESVFMTSGLNGSVHIWDRRMTQSPAL), 506 to 544 (SISGPVSCVKAMPNNKHLLCASRDNIRLYNVEIAVDASN), and 560 to 600 (HHGG…YDID). Ser451 bears the Phosphoserine mark.

It belongs to the WD repeat SPT8 family. Component of the 1.8 MDa SAGA (Spt-Ada-Gcn5 acetyltransferase) complex, which is composed of 19 subunits TRA1, SPT7, TAF5, NGG1/ADA3, SGF73, SPT20/ADA5, SPT8, TAF12, TAF6, HFI1/ADA1, UBP8, GCN5, ADA2, SPT3, SGF29, TAF10, TAF9, SGF11 and SUS1. The SAGA complex is composed of 4 modules, namely the HAT (histone acetyltransferase) module (GCN5, ADA2, NGG1/ADA3 and SGF29), the DUB (deubiquitinating) module (UBP8, SGF11, SGF73 and SUS1), the core or TAF (TBP-associated factor) module (TAF5, TAF6, TAF9, TAF10 and TAF12), and the Tra1 or SPT (Suppressor of Ty) module (TRA1, HFI1/ADA1, SPT3, SPT7, SPT8 and SPT20/ADA5). The Tra1/SPT module binds activators, the core module recruits TBP (TATA-binding protein), the HAT module contains the histone H3 acetyltransferase GCN5, and the DUB module comprises the histone H2B deubiquitinase UBP8.

The protein resides in the nucleus. Functionally, component of the transcription coactivator SAGA complex. SAGA acts as a general cofactor required for essentially all RNA polymerase II transcription. At the promoters, SAGA is required for transcription pre-initiation complex (PIC) recruitment. It influences RNA polymerase II transcriptional activity through different activities such as TBP interaction (via core/TAF module) and promoter selectivity, interaction with transcription activators (via Tra1/SPT module), and chromatin modification through histone acetylation (via HAT module) and deubiquitination (via DUB module). SAGA preferentially acetylates histones H3 (to form H3K9ac, H3K14ac, H3K18ac and H3K23ac) and H2B and deubiquitinates histone H2B. SAGA interacts with DNA via upstream activating sequences (UASs). During SAGA-mediated transcriptional inhibition, SPT3 and SPT8 prevent binding of TBP to the TATA box. The sequence is that of SAGA complex subunit SPT8 (SPT8) from Saccharomyces cerevisiae (strain ATCC 204508 / S288c) (Baker's yeast).